The sequence spans 625 residues: Probable potassium transport system protein Kup (625 aa).

Helical transmembrane passes span 10 to 30, 50 to 70, 102 to 122, 142 to 162, 172 to 192, 215 to 235, 250 to 270, 284 to 304, 340 to 360, 369 to 389, 397 to 417, and 422 to 442; these read LAALTLAAVGIVYGDIGTSPL, LLGVVSLIVWGLIIIVSLKYV, YFPLLVMGLFGATLFYGDSVI, FDPYVVPLTVAVLVGLYSVQA, FGPIMVVWFATLAVMGVVNII, FLAFIALGAVVLAFTGAEALY, WFLVAFPALALNYLGQGALLL, LGAWSIYPLVALSTMAAIIAS, IYIPAVNWLQMAVVVMAVVGF, AYGIAVTATMLVTTILTFFVI, LLLCLASTGFFLVIDLSLFSA, and LFHGGWFPLLLGTILFTLMLT.

The protein belongs to the HAK/KUP transporter (TC 2.A.72) family.

Its subcellular location is the cell inner membrane. The enzyme catalyses K(+)(in) + H(+)(in) = K(+)(out) + H(+)(out). In terms of biological role, transport of potassium into the cell. Likely operates as a K(+):H(+) symporter. The sequence is that of Probable potassium transport system protein Kup from Janthinobacterium sp. (strain Marseille) (Minibacterium massiliensis).